We begin with the raw amino-acid sequence, 472 residues long: D-inositol 3-phosphate glycosyltransferase (472 aa).

Histidine 48 serves as a coordination point for 1D-myo-inositol 3-phosphate. UDP-N-acetyl-alpha-D-glucosamine-binding positions include 54 to 55 (QP) and glycine 62. Residues 59–64 (DAGGMN), lysine 117, tyrosine 150, threonine 174, and arginine 194 each bind 1D-myo-inositol 3-phosphate. Residues arginine 282, lysine 287, and valine 348 each coordinate UDP-N-acetyl-alpha-D-glucosamine. Residues phenylalanine 357, arginine 358, and alanine 360 each contribute to the Mg(2+) site. Positions 370 and 378 each coordinate UDP-N-acetyl-alpha-D-glucosamine. Threonine 384 is a binding site for Mg(2+).

Belongs to the glycosyltransferase group 1 family. MshA subfamily. As to quaternary structure, homodimer.

The catalysed reaction is 1D-myo-inositol 3-phosphate + UDP-N-acetyl-alpha-D-glucosamine = 1D-myo-inositol 2-acetamido-2-deoxy-alpha-D-glucopyranoside 3-phosphate + UDP + H(+). Functionally, catalyzes the transfer of a N-acetyl-glucosamine moiety to 1D-myo-inositol 3-phosphate to produce 1D-myo-inositol 2-acetamido-2-deoxy-glucopyranoside 3-phosphate in the mycothiol biosynthesis pathway. The protein is D-inositol 3-phosphate glycosyltransferase of Streptomyces griseus subsp. griseus (strain JCM 4626 / CBS 651.72 / NBRC 13350 / KCC S-0626 / ISP 5235).